The sequence spans 66 residues: Stress-induced protein KIN1 (66 aa).

A compositionally biased stretch (polar residues) spans methionine 1–glutamine 13. The disordered stretch occupies residues methionine 1–alanine 52. The span at lysine 17–aspartate 31 shows a compositional bias: basic and acidic residues. Repeats lie at residues aspartate 31–glycine 35 and aspartate 49–glycine 53. Positions alanine 32–lysine 45 are enriched in low complexity.

In Arabidopsis thaliana (Mouse-ear cress), this protein is Stress-induced protein KIN1 (KIN1).